The sequence spans 51 residues: UPF0391 membrane protein Psyc_0130 (51 aa).

2 helical membrane passes run 6 to 26 (IIFAVIALLASFLGFGGVAGL) and 28 to 47 (ANFAYILLALAVILFIVAFV).

This sequence belongs to the UPF0391 family.

It is found in the cell membrane. This chain is UPF0391 membrane protein Psyc_0130, found in Psychrobacter arcticus (strain DSM 17307 / VKM B-2377 / 273-4).